The chain runs to 124 residues: Large ribosomal subunit protein bL12 (124 aa).

The protein belongs to the bacterial ribosomal protein bL12 family. In terms of assembly, homodimer. Part of the ribosomal stalk of the 50S ribosomal subunit. Forms a multimeric L10(L12)X complex, where L10 forms an elongated spine to which 2 to 4 L12 dimers bind in a sequential fashion. Binds GTP-bound translation factors.

Forms part of the ribosomal stalk which helps the ribosome interact with GTP-bound translation factors. Is thus essential for accurate translation. The chain is Large ribosomal subunit protein bL12 from Anaeromyxobacter dehalogenans (strain 2CP-C).